The chain runs to 474 residues: Glutamate--tRNA ligase 1 (474 aa).

The 'HIGH' region motif lies at 10–20 (PSPTGFLHIGG). Residues 239–243 (KLSKR) carry the 'KMSKS' region motif. An ATP-binding site is contributed by Lys-242.

This sequence belongs to the class-I aminoacyl-tRNA synthetase family. Glutamate--tRNA ligase type 1 subfamily. In terms of assembly, monomer.

It is found in the cytoplasm. It carries out the reaction tRNA(Glu) + L-glutamate + ATP = L-glutamyl-tRNA(Glu) + AMP + diphosphate. Its function is as follows. Catalyzes the attachment of glutamate to tRNA(Glu) in a two-step reaction: glutamate is first activated by ATP to form Glu-AMP and then transferred to the acceptor end of tRNA(Glu). The polypeptide is Glutamate--tRNA ligase 1 (Methylobacterium sp. (strain 4-46)).